We begin with the raw amino-acid sequence, 589 residues long: Serine/threonine-protein kinase STE7 homolog (589 aa).

The span at 1-18 (MTRTTRIDTQEATKHKDL) shows a compositional bias: basic and acidic residues. Disordered regions lie at residues 1–162 (MTRT…DPDN) and 185–232 (RQHY…PASS). The segment covering 24–33 (PLSLSSNPNP) has biased composition (low complexity). Polar residues predominate over residues 57–69 (VKSTSGSLRSSDM). The segment covering 92-121 (PTASSSATSTPTSNITGSSSASSIQFAQKS) has biased composition (low complexity). Polar residues-rich tracts occupy residues 127-136 (IVSQTLSRPS) and 144-162 (SGYS…DPDN). Positions 185–203 (RQHYQNSHHHLPTTNRKRQ) are enriched in basic residues. A compositionally biased stretch (low complexity) spans 206 to 220 (ISSISPTKSSAASSP). In terms of domain architecture, Protein kinase spans 249–565 (LLTLKQLGSG…QLLEDKEHFF (317 aa)). Residues 255–263 (LGSGNSGSV) and lysine 278 each bind ATP. Aspartate 374 functions as the Proton acceptor in the catalytic mechanism. Residue serine 402 is modified to Phosphoserine. Position 408 is a phosphothreonine (threonine 408). Positions 473 to 499 (IAAERNGQNSPSRSRKNKQKGNGYNSY) are disordered.

This sequence belongs to the protein kinase superfamily. STE Ser/Thr protein kinase family. MAP kinase kinase subfamily.

It catalyses the reaction L-seryl-[protein] + ATP = O-phospho-L-seryl-[protein] + ADP + H(+). The enzyme catalyses L-threonyl-[protein] + ATP = O-phospho-L-threonyl-[protein] + ADP + H(+). It carries out the reaction L-tyrosyl-[protein] + ATP = O-phospho-L-tyrosyl-[protein] + ADP + H(+). The protein is Serine/threonine-protein kinase STE7 homolog (HST7) of Candida albicans (strain WO-1) (Yeast).